The primary structure comprises 488 residues: Dihydrolipoyl dehydrogenase, mitochondrial (488 aa).

A mitochondrion-targeting transit peptide spans 1–25 (MLRINRISNLRTFGQRFFSTEQQDV). Residues 52-61 (EKRGKLGGTC), K70, G134, and 163-165 (TGS) contribute to the FAD site. Residues C61 and C66 are joined by a disulfide bond. NAD(+) is bound by residues 200–207 (GGGVIGLE), E223, V257, and G294. FAD contacts are provided by residues D335 and 341 to 344 (MLAH). H467 (proton acceptor) is an active-site residue.

It belongs to the class-I pyridine nucleotide-disulfide oxidoreductase family. FAD serves as cofactor.

Its subcellular location is the mitochondrion matrix. The enzyme catalyses N(6)-[(R)-dihydrolipoyl]-L-lysyl-[protein] + NAD(+) = N(6)-[(R)-lipoyl]-L-lysyl-[protein] + NADH + H(+). This Dictyostelium discoideum (Social amoeba) protein is Dihydrolipoyl dehydrogenase, mitochondrial (lpd).